The following is a 273-amino-acid chain: Putative phosphoenolpyruvate synthase regulatory protein (273 aa).

153 to 160 lines the ADP pocket; it reads AVSRAGKT.

The protein belongs to the pyruvate, phosphate/water dikinase regulatory protein family. PSRP subfamily.

It carries out the reaction [pyruvate, water dikinase] + ADP = [pyruvate, water dikinase]-phosphate + AMP + H(+). The catalysed reaction is [pyruvate, water dikinase]-phosphate + phosphate + H(+) = [pyruvate, water dikinase] + diphosphate. Its function is as follows. Bifunctional serine/threonine kinase and phosphorylase involved in the regulation of the phosphoenolpyruvate synthase (PEPS) by catalyzing its phosphorylation/dephosphorylation. The sequence is that of Putative phosphoenolpyruvate synthase regulatory protein from Xylella fastidiosa (strain M23).